The chain runs to 166 residues: DNA polymerase epsilon subunit C (166 aa).

Positions 112–166 (SPEIDIESEDEVDEANEPEVGEPEVDEAEVEAEVEAEAAEPETHTLDEPRPESSS) are disordered. A compositionally biased stretch (acidic residues) spans 115–151 (IDIESEDEVDEANEPEVGEPEVDEAEVEAEVEAEAAE). The segment covering 152–166 (PETHTLDEPRPESSS) has biased composition (basic and acidic residues).

Heterotetramer. Consists of four subunits: POL2, DPB2, DPB3 and DPB4.

It is found in the nucleus. In terms of biological role, as accessory component of the DNA polymerase epsilon (DNA polymerase II) participates in chromosomal DNA replication. This is DNA polymerase epsilon subunit C (DPB3) from Kluyveromyces lactis (strain ATCC 8585 / CBS 2359 / DSM 70799 / NBRC 1267 / NRRL Y-1140 / WM37) (Yeast).